The following is a 658-amino-acid chain: L-type lectin-domain containing receptor kinase V.4 (658 aa).

The signal sequence occupies residues 1–25; sequence MSRTIGSRVIFLILALFCCTENSRG. Positions 26-248 are legume-lectin like; that stretch reads KLVMQGSAGF…RAMHYMLSWF (223 aa). Residues 26-280 lie on the Extracellular side of the membrane; the sequence is KLVMQGSAGF…EKSLVYRIVL (255 aa). Asn66 and Asn196 each carry an N-linked (GlcNAc...) asparagine glycan. A helical transmembrane segment spans residues 281–301; the sequence is VTSLALVLFVALVASALSIFF. The Cytoplasmic segment spans residues 302 to 658; that stretch reads YRRHKKVKEV…LTEPFTSRGR (357 aa). The region spanning 334–592 is the Protein kinase domain; that stretch reads KGFKQLLGKG…LGVLCSHQAV (259 aa). ATP contacts are provided by residues 340-348 and Lys363; that span reads LGKGGFGQV. Asp460 (proton acceptor) is an active-site residue.

This sequence in the C-terminal section; belongs to the protein kinase superfamily. Ser/Thr protein kinase family. The protein in the N-terminal section; belongs to the leguminous lectin family.

It localises to the cell membrane. The catalysed reaction is L-seryl-[protein] + ATP = O-phospho-L-seryl-[protein] + ADP + H(+). The enzyme catalyses L-threonyl-[protein] + ATP = O-phospho-L-threonyl-[protein] + ADP + H(+). Functionally, involved in resistance response to the pathogenic oomycetes Phytophthora infestans and Phytophthora capsici and to the pathogenic bacteria Pseudomonas syringae. The polypeptide is L-type lectin-domain containing receptor kinase V.4 (Arabidopsis thaliana (Mouse-ear cress)).